A 462-amino-acid chain; its full sequence is Argininosuccinate lyase (462 aa).

Belongs to the lyase 1 family. Argininosuccinate lyase subfamily.

Its subcellular location is the cytoplasm. The catalysed reaction is 2-(N(omega)-L-arginino)succinate = fumarate + L-arginine. The protein operates within amino-acid biosynthesis; L-arginine biosynthesis; L-arginine from L-ornithine and carbamoyl phosphate: step 3/3. The protein is Argininosuccinate lyase of Methylobacterium sp. (strain 4-46).